Reading from the N-terminus, the 63-residue chain is Prokaryotic ubiquitin-like protein Pup 1 (63 aa).

Composition is skewed to basic and acidic residues over residues 1-12 (MSQEKVQRHGGG) and 24-33 (GQERREKLGE). The interval 1 to 35 (MSQEKVQRHGGGDGEEESGPEAAGQERREKLGEDV) is disordered. An ARC ATPase binding region spans residues 20-57 (PEAAGQERREKLGEDVDAILDEIDDVLEENAEDFVRAY). Positions 25–51 (QERREKLGEDVDAILDEIDDVLEENAE) form a coiled coil. Deamidated glutamine is present on Gln63. Gln63 participates in a covalent cross-link: Isoglutamyl lysine isopeptide (Gln-Lys) (interchain with K-? in acceptor proteins).

The protein belongs to the prokaryotic ubiquitin-like protein family. Strongly interacts with the proteasome-associated ATPase ARC through a hydrophobic interface; the interacting region of Pup lies in its C-terminal half. There is one Pup binding site per ARC hexamer ring. Post-translationally, is modified by deamidation of its C-terminal glutamine to glutamate by the deamidase Dop, a prerequisite to the subsequent pupylation process.

Its pathway is protein degradation; proteasomal Pup-dependent pathway. In terms of biological role, protein modifier that is covalently attached to lysine residues of substrate proteins, thereby targeting them for proteasomal degradation. The tagging system is termed pupylation. In Saccharopolyspora erythraea (strain ATCC 11635 / DSM 40517 / JCM 4748 / NBRC 13426 / NCIMB 8594 / NRRL 2338), this protein is Prokaryotic ubiquitin-like protein Pup 1.